Consider the following 567-residue polypeptide: PHD finger protein 1 (567 aa).

Residues 1–31 (MAQPPRLSRSGASSLWDPASPAPTSGPRPRL) are disordered. One can recognise a Tudor domain in the interval 29–86 (PRLWEGQDVLARWTDGLLYLGTIKKVDSAREVCLVQFEDDSQFLVLWKDISPAALPGE). 2 consecutive PHD-type zinc fingers follow at residues 87 to 142 (ELLC…CVFA) and 186 to 240 (QSYC…CRGG). Disordered stretches follow at residues 333–441 (ARMP…TDAR) and 455–537 (HPSA…GYLS). G360 bears the Phosphoserine mark. Over residues 371 to 386 (PEPEPLRRRQKGKVEE) the composition is skewed to basic and acidic residues. S420 bears the Phosphoserine mark. 3 stretches are compositionally biased toward low complexity: residues 423–433 (PNQSYQGSSGY), 456–470 (PSAS…SGPP), and 488–510 (SAPH…LPRR). The span at 524 to 534 (GTGGGVRGGVG) shows a compositional bias: gly residues.

The protein belongs to the Polycomblike family. In terms of assembly, interacts with CHMP1. Associated component of the PRC2 complex. Interacts with p53/TP53. In terms of tissue distribution, highest levels in heart, skeletal muscle, and pancreas, lower levels in brain, placenta, lung, liver and kidney.

The protein localises to the nucleus. It localises to the cytoplasm. It is found in the cytoskeleton. Its subcellular location is the microtubule organizing center. The protein resides in the centrosome. Polycomb group (PcG) that specifically binds histone H3 trimethylated at 'Lys-36' (H3K36me3) and recruits the PRC2 complex. Involved in DNA damage response and is recruited at double-strand breaks (DSBs). Acts by binding to H3K36me3, a mark for transcriptional activation, and recruiting the PRC2 complex: it is however unclear whether recruitment of the PRC2 complex to H3K36me3 leads to enhance or inhibit H3K27me3 methylation mediated by the PRC2 complex. According to some reports, PRC2 recruitment by PHF1 promotes H3K27me3 and subsequent gene silencing by inducing spreading of PRC2 and H3K27me3 into H3K36me3 loci. According to another report, PHF1 recruits the PRC2 complex at double-strand breaks (DSBs) and inhibits the activity of PRC2. Regulates p53/TP53 stability and prolonges its turnover: may act by specifically binding to a methylated from of p53/TP53. The chain is PHD finger protein 1 (PHF1) from Homo sapiens (Human).